We begin with the raw amino-acid sequence, 117 residues long: Large ribosomal subunit protein bL19 (117 aa).

Belongs to the bacterial ribosomal protein bL19 family.

Its function is as follows. This protein is located at the 30S-50S ribosomal subunit interface and may play a role in the structure and function of the aminoacyl-tRNA binding site. The polypeptide is Large ribosomal subunit protein bL19 (Alkaliphilus metalliredigens (strain QYMF)).